The primary structure comprises 1557 residues: Ras guanine nucleotide exchange factor K (1557 aa).

The segment covering 1–16 (MEPTINPPVNLPPPVP) has biased composition (pro residues). Disordered stretches follow at residues 1-121 (MEPT…SYTV), 146-181 (VETL…KLSV), 195-238 (LYQQ…SPQL), 283-347 (SPLP…GLTP), 558-619 (NNNN…DELS), and 881-937 (TNNN…QVNH). Composition is skewed to low complexity over residues 17 to 40 (SRSN…NNTN), 52 to 63 (SSPSSPSSPSPS), 73 to 90 (NNNN…NGNV), 102 to 114 (ISSP…HTSS), 148 to 161 (TLSS…KTTT), 195 to 207 (LYQQ…NPNS), and 222 to 236 (PPSS…STSP). The segment covering 283–310 (SPLPPPPLTIPNKVPPLPMRLPPPPPPQ) has biased composition (pro residues). 2 coiled-coil regions span residues 310–338 (QQLD…SNST) and 591–629 (NNNN…EEEL). Residues 311–333 (QLDQMYSNNNQQQQQQQQQQQNN) are compositionally biased toward low complexity. A compositionally biased stretch (polar residues) spans 334–343 (ESNSTTTSEG). Composition is skewed to low complexity over residues 558–610 (NNNN…NNNN) and 881–928 (TNNN…TPTT). Residues 1058–1177 (LNAEIDAATL…QIRNCILKRT (120 aa)) form the N-terminal Ras-GEF domain. Residues 1254-1303 (PSISQNTPSSPSLIPSSPRPITSSSSVSSSTLLKSPLSQQAKSRIPETKT) form a disordered region. Positions 1261 to 1291 (PSSPSLIPSSPRPITSSSSVSSSTLLKSPLS) are enriched in low complexity. Positions 1316 to 1549 (DDEEIARQLT…YHLSLLKEPR (234 aa)) constitute a Ras-GEF domain.

Its function is as follows. Promotes the exchange of Ras-bound GDP by GTP. The sequence is that of Ras guanine nucleotide exchange factor K (gefK) from Dictyostelium discoideum (Social amoeba).